Consider the following 451-residue polypeptide: Bifunctional protein GlmU (451 aa).

Positions 1–226 are pyrophosphorylase; it reads MVAVAILAAG…YLEISGINDR (226 aa). UDP-N-acetyl-alpha-D-glucosamine is bound by residues 7-10, lysine 21, glutamine 73, and 78-79; these read LAAG and GT. Position 103 (aspartate 103) interacts with Mg(2+). 4 residues coordinate UDP-N-acetyl-alpha-D-glucosamine: glycine 140, glutamate 155, asparagine 170, and asparagine 224. Asparagine 224 contacts Mg(2+). The linker stretch occupies residues 227-247; that stretch reads KQLATAYDILQNRIKDYWMRA. Residues 248–451 form an N-acetyltransferase region; it reads GVTLIDPDSI…ISGWRMKTDD (204 aa). Residues arginine 329 and lysine 347 each coordinate UDP-N-acetyl-alpha-D-glucosamine. Residue histidine 359 is the Proton acceptor of the active site. UDP-N-acetyl-alpha-D-glucosamine contacts are provided by tyrosine 362 and asparagine 373. Residues alanine 376, 382–383, alanine 419, and arginine 436 each bind acetyl-CoA; that span reads NY.

The protein in the N-terminal section; belongs to the N-acetylglucosamine-1-phosphate uridyltransferase family. It in the C-terminal section; belongs to the transferase hexapeptide repeat family. Homotrimer. The cofactor is Mg(2+).

The protein resides in the cytoplasm. It carries out the reaction alpha-D-glucosamine 1-phosphate + acetyl-CoA = N-acetyl-alpha-D-glucosamine 1-phosphate + CoA + H(+). It catalyses the reaction N-acetyl-alpha-D-glucosamine 1-phosphate + UTP + H(+) = UDP-N-acetyl-alpha-D-glucosamine + diphosphate. It functions in the pathway nucleotide-sugar biosynthesis; UDP-N-acetyl-alpha-D-glucosamine biosynthesis; N-acetyl-alpha-D-glucosamine 1-phosphate from alpha-D-glucosamine 6-phosphate (route II): step 2/2. The protein operates within nucleotide-sugar biosynthesis; UDP-N-acetyl-alpha-D-glucosamine biosynthesis; UDP-N-acetyl-alpha-D-glucosamine from N-acetyl-alpha-D-glucosamine 1-phosphate: step 1/1. Its pathway is bacterial outer membrane biogenesis; LPS lipid A biosynthesis. Functionally, catalyzes the last two sequential reactions in the de novo biosynthetic pathway for UDP-N-acetylglucosamine (UDP-GlcNAc). The C-terminal domain catalyzes the transfer of acetyl group from acetyl coenzyme A to glucosamine-1-phosphate (GlcN-1-P) to produce N-acetylglucosamine-1-phosphate (GlcNAc-1-P), which is converted into UDP-GlcNAc by the transfer of uridine 5-monophosphate (from uridine 5-triphosphate), a reaction catalyzed by the N-terminal domain. The sequence is that of Bifunctional protein GlmU from Gloeothece citriformis (strain PCC 7424) (Cyanothece sp. (strain PCC 7424)).